We begin with the raw amino-acid sequence, 229 residues long: Ribonuclease S-6 (229 aa).

Positions 1 to 27 (MGITGMIYMVPMVFSLIVLISCSSTMG) are cleaved as a signal peptide. Position 36 (Gln-36) interacts with RNA. Cys-42 and Cys-49 form a disulfide bridge. His-60 serves as a coordination point for RNA. His-60 acts as the Proton donor in catalysis. Residues Cys-75 and Cys-119 are joined by a disulfide bond. Asn-77 and Asn-87 each carry an N-linked (GlcNAc) asparagine glycan. RNA is bound by residues 98–99 (NV), Phe-108, 111–112 (RQ), and 115–116 (KH). Residue Gln-112 is part of the active site. His-116 (proton acceptor) is an active-site residue. The N-linked (GlcNAc...) (high mannose) asparagine glycan is linked to Asn-145. Disulfide bonds link Cys-184–Cys-222 and Cys-199–Cys-210. An N-linked (GlcNAc) asparagine; alternate glycan is attached at Asn-188. N-linked (GlcNAc...) asparagine; alternate glycans are attached at residues Asn-188 and Asn-203.

Belongs to the RNase T2 family. In terms of processing, the N-glycans attached at Asn-188 and Asn-203 consist of either monosaccharide (GlcNAc) or disaccharide (GlcNAc-GlcNAc) that could not be distinguished.

It carries out the reaction a ribonucleotidyl-ribonucleotide-RNA + H2O = a 3'-end 3'-phospho-ribonucleotide-RNA + a 5'-end dephospho-ribonucleoside-RNA + H(+). Its function is as follows. Self-incompatibility (SI) is the inherited ability of a flowering plant to prevent self-fertilization by discriminating between self and non-self pollen during pollination. In many species, self-incompatibility is controlled by the single, multiallelic locus S. In Pyrus pyrifolia (Chinese pear), this protein is Ribonuclease S-6.